A 568-amino-acid chain; its full sequence is Urease subunit alpha (568 aa).

The Urease domain maps to 130–568; it reads GGIDTHIHFI…LPMAQRYFLF (439 aa). Ni(2+)-binding residues include histidine 135, histidine 137, and lysine 218. Position 218 is an N6-carboxylysine (lysine 218). Position 220 (histidine 220) interacts with substrate. Ni(2+) is bound by residues histidine 247 and histidine 273. Histidine 321 acts as the Proton donor in catalysis. Residue aspartate 361 participates in Ni(2+) binding.

The protein belongs to the metallo-dependent hydrolases superfamily. Urease alpha subunit family. As to quaternary structure, heterotrimer of UreA (gamma), UreB (beta) and UreC (alpha) subunits. Three heterotrimers associate to form the active enzyme. Requires Ni cation as cofactor. Carboxylation allows a single lysine to coordinate two nickel ions.

Its subcellular location is the cytoplasm. The enzyme catalyses urea + 2 H2O + H(+) = hydrogencarbonate + 2 NH4(+). It participates in nitrogen metabolism; urea degradation; CO(2) and NH(3) from urea (urease route): step 1/1. The chain is Urease subunit alpha from Burkholderia orbicola (strain MC0-3).